The chain runs to 1140 residues: Structural maintenance of chromosomes protein 6 (1140 aa).

Positions 1 to 63 (MTTELTNVSL…ERQSRLQRSS (63 aa)) are disordered. Residues 14–28 (ITEKTSENRRKRDSD) are compositionally biased toward basic and acidic residues. Short sequence motifs (nuclear localization signal) lie at residues 22-25 (RRKR) and 41-44 (KRIR). Residues 47-57 (RNQDNRPERQS) show a composition bias toward basic and acidic residues. ATP is bound at residue 124 to 131 (GHNGSGKS). 3 coiled-coil regions span residues 262–290 (IQLK…NKKT), 329–369 (AQVV…QSDI), and 448–493 (GSQI…GGNL). A flexible hinge region spans residues 494-710 (TSLLTKKDSI…WNRPPRIGFS (217 aa)). Coiled coils occupy residues 711–978 (SSTS…RNEM) and 1113–1140 (IGLD…STAP).

This sequence belongs to the SMC family. SMC6 subfamily. In terms of assembly, two subcomplexes smc5-smc6-nse2 and nse1-nse3-nse4 exist. These subcomplexes are then brought together via a number of interactions, forming the Smc5-Smc6 complex. Sumoylated by nse2.

It is found in the nucleus. The protein resides in the chromosome. In terms of biological role, acts in a DNA repair pathway for removal of UV-induced DNA damage that is distinct from classical nucleotide excision repair and in repair of ionizing radiation damage. Functions in homologous recombination repair of DNA double strand breaks and in recovery of stalled replication forks. Plays a critical role in meiosis. This Schizosaccharomyces pombe (strain 972 / ATCC 24843) (Fission yeast) protein is Structural maintenance of chromosomes protein 6 (smc6).